The chain runs to 401 residues: Arylacetamide deacetylase-like 2 (401 aa).

The signal sequence occupies residues 1-18 (MGLKALCLGLLCVLFVSH). An Involved in the stabilization of the negatively charged intermediate by the formation of the oxyanion hole motif is present at residues 111 to 113 (HGG). Residues Cys116 and Cys338 are joined by a disulfide bond. Active-site residues include Ser189, Asp341, and His371.

Belongs to the 'GDXG' lipolytic enzyme family.

It is found in the secreted. The chain is Arylacetamide deacetylase-like 2 (AADACL2) from Homo sapiens (Human).